Reading from the N-terminus, the 737-residue chain is Aryl hydrocarbon receptor nuclear translocator 2 (737 aa).

The tract at residues 1 to 73 (MATPAAVNPS…SRYDDDQIPG (73 aa)) is disordered. A compositionally biased stretch (basic and acidic residues) spans 64-73 (SRYDDDQIPG). A bHLH domain is found at 78 to 131 (YARENHSEIERRRRNKMTQYITELSDMVPTCSALARKPDKLTILRMAVSHMKSM). 2 PAS domains span residues 149-221 (TEQE…ENSM) and 340-406 (SMDM…QVVK). In terms of domain architecture, PAC spans 413 to 456 (SVMYRFRMKNREWMLIRTSSFTFQNPYSDEIEYIICTNTNVKQL). Disordered regions lie at residues 525–556 (MMVP…FSSS) and 588–721 (QVSW…TTNY). Polar residues-rich tracts occupy residues 528–543 (PSST…QGSP) and 588–626 (QVSW…YQAD). The span at 627-642 (PSSYSPLSSPATSSPS) shows a compositional bias: low complexity. The span at 643–656 (GNAYSNLANRNTAF) shows a compositional bias: polar residues. The span at 659-688 (SGESSQSGGQFQGRPSEVWSQWQSQHHSQQ) shows a compositional bias: low complexity.

As to quaternary structure, efficient DNA binding requires dimerization with another bHLH protein. Heterodimer with the aryl hydrocarbon receptor (AHR), SIM1 or HIF2A/EPAS-1. Isoform 1 and isoform 2 are most highly expressed in the brain, eye and skeletal muscle and to a lower degree in liver, heart, kidney and swim bladder. Isoform 3 is most highly expressed in the eye, forebrain, midbrain, hindbrain, skeletal muscle, gills and brain but is barely detectable in liver, heart, kidney and swim bladder. Before the pharyngula period isoform 3 is expressed throughout the entire embryo and during this period extensively in the brain and eye.

Its subcellular location is the nucleus. Functionally, transcription factor that plays a role in the development of the hypothalamo-pituitary axis. Specifically recognizes the xenobiotic response element (XRE). Isoform 1 acts as a transcriptional activator. Isoform 3 acts as a transcriptional repressor. This Danio rerio (Zebrafish) protein is Aryl hydrocarbon receptor nuclear translocator 2.